We begin with the raw amino-acid sequence, 201 residues long: uncharacterized protein (201 aa).

The protein belongs to the methyltransferase superfamily.

This is an uncharacterized protein from Bacillus subtilis (strain 168).